The sequence spans 196 residues: Imidazoleglycerol-phosphate dehydratase (196 aa).

Belongs to the imidazoleglycerol-phosphate dehydratase family.

The protein localises to the cytoplasm. The enzyme catalyses D-erythro-1-(imidazol-4-yl)glycerol 3-phosphate = 3-(imidazol-4-yl)-2-oxopropyl phosphate + H2O. It participates in amino-acid biosynthesis; L-histidine biosynthesis; L-histidine from 5-phospho-alpha-D-ribose 1-diphosphate: step 6/9. This is Imidazoleglycerol-phosphate dehydratase from Clostridium botulinum (strain Kyoto / Type A2).